We begin with the raw amino-acid sequence, 72 residues long: DNA-directed RNA polymerase subunit Rpo10 (72 aa).

Cysteine 7, cysteine 10, cysteine 53, and cysteine 54 together coordinate Zn(2+).

This sequence belongs to the archaeal Rpo10/eukaryotic RPB10 RNA polymerase subunit family. In terms of assembly, part of the RNA polymerase complex. Requires Zn(2+) as cofactor.

Its subcellular location is the cytoplasm. It carries out the reaction RNA(n) + a ribonucleoside 5'-triphosphate = RNA(n+1) + diphosphate. Functionally, DNA-dependent RNA polymerase (RNAP) catalyzes the transcription of DNA into RNA using the four ribonucleoside triphosphates as substrates. The chain is DNA-directed RNA polymerase subunit Rpo10 from Thermoplasma acidophilum (strain ATCC 25905 / DSM 1728 / JCM 9062 / NBRC 15155 / AMRC-C165).